The chain runs to 255 residues: Small ribosomal subunit protein eS1 (255 aa).

Position 2 is an N-acetylalanine; partial (alanine 2).

It belongs to the eukaryotic ribosomal protein eS1 family. As to quaternary structure, component of the small ribosomal subunit. Mature ribosomes consist of a small (40S) and a large (60S) subunit. The 40S subunit contains about 33 different proteins and 1 molecule of RNA (18S). The 60S subunit contains about 49 different proteins and 3 molecules of RNA (25S, 5.8S and 5S).

Its subcellular location is the cytoplasm. The polypeptide is Small ribosomal subunit protein eS1 (rps1) (Pyrenophora tritici-repentis (strain Pt-1C-BFP) (Wheat tan spot fungus)).